The sequence spans 293 residues: Urease accessory protein UreD (293 aa).

Residues 1 to 22 (MAVAQQAWSPGADPAPSAAPVS) are disordered. The span at 7-22 (AWSPGADPAPSAAPVS) shows a compositional bias: low complexity.

The protein belongs to the UreD family. In terms of assembly, ureD, UreF and UreG form a complex that acts as a GTP-hydrolysis-dependent molecular chaperone, activating the urease apoprotein by helping to assemble the nickel containing metallocenter of UreC. The UreE protein probably delivers the nickel.

It is found in the cytoplasm. Required for maturation of urease via the functional incorporation of the urease nickel metallocenter. The chain is Urease accessory protein UreD from Alkalilimnicola ehrlichii (strain ATCC BAA-1101 / DSM 17681 / MLHE-1).